A 5098-amino-acid chain; its full sequence is Malformin synthetase mlfA (5098 aa).

Residues 225–616 (ERHAANRPHS…CGRADTQVKL (392 aa)) form an adenylation 1 region. Positions 756–829 (SRLEQEIQLA…EAASLAKVQE (74 aa)) constitute a Carrier 1 domain. Serine 790 bears the O-(pantetheine 4'-phosphoryl)serine mark. Residues 867–1298 (EDVFPCTTMQ…ALDSLTLLQA (432 aa)) are condensation 1. The interval 1326-1715 (DGWVTRQPES…GRKDTQVKLR (390 aa)) is adenylation 2. Residues 1853–1930 (TAASELERTL…QLAAEFGEPA (78 aa)) enclose the Carrier 2 domain. Serine 1890 carries the O-(pantetheine 4'-phosphoryl)serine modification. Disordered stretches follow at residues 1930 to 1960 (AGQSASSASSTTEEGFTFSTPDDSSTNDGVD) and 1993 to 2022 (GSSSSSKTPSGSSSSSSSSSRKKKSARVVS). 2 stretches are compositionally biased toward low complexity: residues 1933–1957 (SASSASSTTEEGFTFSTPDDSSTND) and 1993–2011 (GSSSSSKTPSGSSSSSSSS). A condensation 2 region spans residues 2063 to 2478 (EDIYPATALQ…ALSHSDRQTL (416 aa)). An adenylation 3 region spans residues 2501–2893 (VRTPHAPAVC…IGRRDGQLKL (393 aa)). The Carrier 3 domain occupies 3029-3105 (RPVTAQEREM…QLMRHLSATR (77 aa)). O-(pantetheine 4'-phosphoryl)serine is present on serine 3066. 2 condensation regions span residues 3122-3587 (WVAL…TYDQ) and 3608-4027 (NIYP…EQLM). The segment at 4052 to 4442 (HASREAVCAW…VGRKDNQIKF (391 aa)) is adenylation 4. The Carrier 4 domain maps to 4576–4652 (MPSTAAERKM…DLAYRTTNLV (77 aa)). Serine 4613 bears the O-(pantetheine 4'-phosphoryl)serine mark. Positions 4689–5016 (DVLPTTSFQR…LQTIVQHQNN (328 aa)) are condensation 5.

Belongs to the NRP synthetase family.

The protein operates within secondary metabolite biosynthesis. Functionally, nonribosomal peptide synthetase; part of the gene cluster that mediates the biosynthesis of malformins, cyclic pentapeptides with a disulfide bond between 2 consecutive cysteins, that show potential anti-tumor as well as antimalarial and antitrypanosomal properties. The nonribosomal peptide synthetase mlfA is responsible of the formation of the cyclic pentapeptide. The malformin biosynthesis clusters in malformin-producing fungi also contain enzymes involved in the formation of the disulfide bond between the two consecutive cysteins within malformins, in addition to additional tailoring enzymes such as methyltransferases or oxidoreductases. They are also composed of up to 4 major facilitator superfamily transporters, and transcription factors probably involved in the regulation of the expression of those clusters. The chain is Malformin synthetase mlfA from Aspergillus homomorphus (strain CBS 101889).